The sequence spans 95 residues: Putative small ubiquitin-related modifier 7 (95 aa).

Residues 13–90 (SHITIKIKSQ…IDAFVDQIAG (78 aa)) form the Ubiquitin-like domain. Residue Gly90 forms a Glycyl lysine isopeptide (Gly-Lys) (interchain with K-? in acceptor proteins) linkage.

This sequence belongs to the ubiquitin family. SUMO subfamily. Interacts with SAE2, SCE1, SIZ1 and MMS21 Covalently attached to a number of proteins.

It is found in the nucleus. Its subcellular location is the cytoplasm. Functionally, ubiquitin-like protein which can be covalently attached to target lysines as a monomer. Does not seem to be involved in protein degradation and may function as an antagonist of ubiquitin in the degradation process. This chain is Putative small ubiquitin-related modifier 7 (SUMO7), found in Arabidopsis thaliana (Mouse-ear cress).